We begin with the raw amino-acid sequence, 451 residues long: Cysteine protease ATG4 (451 aa).

The Nucleophile role is filled by Cys-122. Residues Asp-297 and His-299 contribute to the active site.

The protein belongs to the peptidase C54 family. As to quaternary structure, interacts with ATG8.

It localises to the cytoplasm. The protein localises to the nucleus. It is found in the preautophagosomal structure. The enzyme catalyses [protein]-C-terminal L-amino acid-glycyl-phosphatidylethanolamide + H2O = [protein]-C-terminal L-amino acid-glycine + a 1,2-diacyl-sn-glycero-3-phosphoethanolamine. Functionally, cysteine protease that plays a key role in cytoplasm to vacuole transport (Cvt) and autophagy by mediating both proteolytic activation and delipidation of ATG8. Required for selective autophagic degradation of the nucleus (nucleophagy) as well as for mitophagy which contributes to regulate mitochondrial quantity and quality by eliminating the mitochondria to a basal level to fulfill cellular energy requirements and preventing excess ROS production. The protease activity is required for proteolytic activation of ATG8: cleaves the C-terminal amino acid of ATG8 to reveal a C-terminal glycine. ATG8 ubiquitin-like activity requires the exposure of the glycine at the C-terminus for its conjugation to phosphatidylethanolamine (PE) and its insertion to membranes, which is necessary for autophagy. The ATG8-PE conjugate mediates tethering between adjacent membranes and stimulates membrane hemifusion, leading to expansion of the autophagosomal membrane during autophagy. In addition to the protease activity, also catalyzes deconjugation of PE-conjugated forms of ATG8 during macroautophagy: ATG8 delipidation is required to release the protein from membranes, which facilitates multiple events during macroautophagy, and especially for efficient autophagosome biogenesis, the assembly of ATG9-containing tubulovesicular clusters into phagophores/autophagosomes, and for the disassembly of PAS-associated ATG components. ATG8 delipidation by ATG4 also recycles ATG8-PE generated on inappropriate membranes to maintain a reservoir of unlipidated ATG8 that is required for autophagosome formation at the PAS. In Kluyveromyces marxianus (strain DMKU3-1042 / BCC 29191 / NBRC 104275) (Yeast), this protein is Cysteine protease ATG4.